A 95-amino-acid polypeptide reads, in one-letter code: Small ribosomal subunit protein bS20 (95 aa).

Positions 1-22 (MANIKSQIKRNRTNENNRLRNK) are disordered. Residues 12 to 22 (RTNENNRLRNK) are compositionally biased toward basic and acidic residues.

This sequence belongs to the bacterial ribosomal protein bS20 family.

Its function is as follows. Binds directly to 16S ribosomal RNA. In Tropheryma whipplei (strain TW08/27) (Whipple's bacillus), this protein is Small ribosomal subunit protein bS20.